The following is a 698-amino-acid chain: Elongation factor G 1 (698 aa).

One can recognise a tr-type G domain in the interval 8 to 290 (ERYRNIGIVA…AVVDYLPAPI (283 aa)). Residues 17–24 (AHVDAGKT), 88–92 (DTPGH), and 142–145 (NKMD) contribute to the GTP site.

The protein belongs to the TRAFAC class translation factor GTPase superfamily. Classic translation factor GTPase family. EF-G/EF-2 subfamily.

Its subcellular location is the cytoplasm. Its function is as follows. Catalyzes the GTP-dependent ribosomal translocation step during translation elongation. During this step, the ribosome changes from the pre-translocational (PRE) to the post-translocational (POST) state as the newly formed A-site-bound peptidyl-tRNA and P-site-bound deacylated tRNA move to the P and E sites, respectively. Catalyzes the coordinated movement of the two tRNA molecules, the mRNA and conformational changes in the ribosome. In Shewanella denitrificans (strain OS217 / ATCC BAA-1090 / DSM 15013), this protein is Elongation factor G 1.